A 295-amino-acid polypeptide reads, in one-letter code: Putative 23S rRNA (guanine-N(1)-)-methyltransferase (295 aa).

Residues Cys11, Cys14, Cys31, and His35 each coordinate Zn(2+). S-adenosyl-L-methionine-binding positions include Tyr74, 116–117 (TG), and His204.

Belongs to the methyltransferase superfamily. RlmA family.

In terms of biological role, confers strong resistance to mycinamicin (MM) and tylosin (TY). May function as methyltransferase. The chain is Putative 23S rRNA (guanine-N(1)-)-methyltransferase (myrA) from Micromonospora griseorubida.